The sequence spans 592 residues: Guanylate-binding protein 1 (592 aa).

The segment at 1 to 311 (MASEIHMTGP…NAISSGDLPC (311 aa)) is GTPase domain (Globular). The region spanning 35-278 (TQPMVVVAIV…FCSYIFSNSK (244 aa)) is the GB1/RHD3-type G domain. GTP contacts are provided by residues 45 to 52 (GLYRTGKS), 67 to 69 (LGS), and 97 to 101 (DTEGL). Position 156 is a phosphoserine; by PIM1 (S156). Residues K207, K209, K210, K382, K562, K567, K573, and K587 each participate in a (Microbial infection) Glycyl lysine isopeptide (Lys-Gly) (interchain with G-Cter in ubiquitin) cross-link. Cysteine methyl ester is present on C589. C589 is lipidated: S-farnesyl cysteine. Residue T590 is modified to Phosphothreonine; by PIM1. A propeptide spans 590–592 (TIS) (removed in mature form).

It belongs to the TRAFAC class dynamin-like GTPase superfamily. GB1/RHD3 GTPase family. GB1 subfamily. In terms of assembly, homodimer; homodimerization occurs upon GTP-binding and is required for the second hydrolysis step from GDP to GMP. Undergoes conformational changes and oligomerization upon GTP-binding and hydrolysis. Heterodimer with other family members, including GBP2, GBP3, GBP4 and GBP5. Dimerization regulates subcellular location to membranous structures. Interacts with SQSTM1. Interacts (when phosphorylated) with 14-3-3 protein sigma (SFN); leading to GBP1 retention in the cytosol and inactivation. Post-translationally, isoprenylation is required for proper subcellular location. In terms of processing, phosphorylated at Ser-156 by PIM1 in absence of infection, inhibits GBP1: phosphorylation promotes interaction with 14-3-3 protein sigma (SFN), leading to GBP1 retention in the cytosol. Dephosphorylated in response to infection, liberating GBP1. (Microbial infection) Ubiquitinated by S.flexneri IpaH9.8, leading to its degradation by the proteasome, thereby preventing its ability to promote host defense against bacterial infection.

The protein resides in the cytoplasmic vesicle membrane. It is found in the golgi apparatus membrane. Its subcellular location is the cell membrane. It localises to the cytoplasm. The protein localises to the cytosol. The protein resides in the secreted. It carries out the reaction GTP + H2O = GDP + phosphate + H(+). The enzyme catalyses GDP + H2O = GMP + phosphate + H(+). Its function is as follows. Interferon (IFN)-inducible GTPase that plays important roles in innate immunity against a diverse range of bacterial, viral and protozoan pathogens. Hydrolyzes GTP to GMP in two consecutive cleavage reactions: GTP is first hydrolyzed to GDP and then to GMP in a processive manner. Following infection, recruited to the pathogen-containing vacuoles or vacuole-escaped bacteria and promotes both inflammasome assembly and autophagy. Acts as a positive regulator of inflammasome assembly by facilitating the detection of inflammasome ligands from pathogens. Involved in the lysis of pathogen-containing vacuoles, releasing pathogens into the cytosol. Following pathogen release in the cytosol, forms a protein coat in a GTPase-dependent manner that encapsulates pathogens and promotes the detection of ligands by pattern recognition receptors. Plays a key role in inflammasome assembly in response to infection by Gram-negative bacteria: following pathogen release in the cytosol, forms a protein coat that encapsulates Gram-negative bacteria and directly binds to lipopolysaccharide (LPS), disrupting the O-antigen barrier and unmasking lipid A that is that detected by the non-canonical inflammasome effector CASP4/CASP11. Also promotes recruitment of proteins that mediate bacterial cytolysis, leading to release double-stranded DNA (dsDNA) that activates the AIM2 inflammasome. Involved in autophagy by regulating bacteriolytic peptide generation via its interaction with ubiquitin-binding protein SQSTM1, which delivers monoubiquitinated proteins to autolysosomes for the generation of bacteriolytic peptides. Confers protection to several pathogens, including the bacterial pathogens L.monocytogenes and M.bovis BCG as well as the protozoan pathogen T.gondii. Exhibits antiviral activity against influenza virus. This Homo sapiens (Human) protein is Guanylate-binding protein 1.